The chain runs to 427 residues: Chaperone SurA (427 aa).

An N-terminal signal peptide occupies residues 1–19 (MKIWKSILFTTLLSCGAVA). 2 PpiC domains span residues 170 to 268 (TVQY…KIED) and 277 to 377 (VTEV…EVLD).

It is found in the periplasm. The catalysed reaction is [protein]-peptidylproline (omega=180) = [protein]-peptidylproline (omega=0). Chaperone involved in the correct folding and assembly of outer membrane proteins. Recognizes specific patterns of aromatic residues and the orientation of their side chains, which are found more frequently in integral outer membrane proteins. May act in both early periplasmic and late outer membrane-associated steps of protein maturation. The polypeptide is Chaperone SurA (Vibrio parahaemolyticus serotype O3:K6 (strain RIMD 2210633)).